The following is a 547-amino-acid chain: CTP synthase (547 aa).

An amidoligase domain region spans residues 1 to 265 (MTRYVFITGG…DEIVLRKLHI (265 aa)). Serine 13 is a CTP binding site. Serine 13 is a UTP binding site. ATP-binding positions include 14-19 (SLGKGI) and aspartate 71. Mg(2+)-binding residues include aspartate 71 and glutamate 139. CTP contacts are provided by residues 146–148 (DIE), 186–191 (KTKPTQ), and lysine 222. Residues 186 to 191 (KTKPTQ) and lysine 222 each bind UTP. The Glutamine amidotransferase type-1 domain occupies 290 to 541 (TVGMVGKYVD…IRAARAQHEK (252 aa)). Glycine 351 lines the L-glutamine pocket. The active-site Nucleophile; for glutamine hydrolysis is the cysteine 378. Residues 379-382 (LGMQ), glutamate 402, and arginine 469 each bind L-glutamine. Active-site residues include histidine 514 and glutamate 516.

It belongs to the CTP synthase family. As to quaternary structure, homotetramer.

The enzyme catalyses UTP + L-glutamine + ATP + H2O = CTP + L-glutamate + ADP + phosphate + 2 H(+). It carries out the reaction L-glutamine + H2O = L-glutamate + NH4(+). It catalyses the reaction UTP + NH4(+) + ATP = CTP + ADP + phosphate + 2 H(+). The protein operates within pyrimidine metabolism; CTP biosynthesis via de novo pathway; CTP from UDP: step 2/2. With respect to regulation, allosterically activated by GTP, when glutamine is the substrate; GTP has no effect on the reaction when ammonia is the substrate. The allosteric effector GTP functions by stabilizing the protein conformation that binds the tetrahedral intermediate(s) formed during glutamine hydrolysis. Inhibited by the product CTP, via allosteric rather than competitive inhibition. Catalyzes the ATP-dependent amination of UTP to CTP with either L-glutamine or ammonia as the source of nitrogen. Regulates intracellular CTP levels through interactions with the four ribonucleotide triphosphates. The chain is CTP synthase from Thioalkalivibrio sulfidiphilus (strain HL-EbGR7).